We begin with the raw amino-acid sequence, 798 residues long: PR domain zinc finger protein 4 (798 aa).

The 118-residue stretch at 408 to 525 folds into the SET domain; that stretch reads KQLVLRQSIV…PENELLFYYS (118 aa). 5 C2H2-type zinc fingers span residues 586-608, 614-636, 642-664, 670-692, and 698-720; these read WKCSMCPQAFISPSKLHVHFMGH, HKCDFCSKAFSDPSNLRTHLKIH, YRCTLCDKSFTQKAHLESHMVIH, LKCDYCDKLFMRRQDLKQHVLIH, and IKCPKCDKLFLRTNHLKKHLNSH. A C2H2-type 6; degenerate zinc finger spans residues 726–747; that stretch reads YVCEKCTKAYLTKYHLTRHLKA. A disordered region spans residues 750 to 798; it reads EPASSSSAQDDEDEDGDSGEDGLPGSMTTEGCRMSSAVYSADESLSAHK. Acidic residues predominate over residues 758–769; sequence QDDEDEDGDSGE.

Belongs to the class V-like SAM-binding methyltransferase superfamily.

It is found in the nucleus. May function as a transcription factor involved in cell differentiation. The sequence is that of PR domain zinc finger protein 4 (Prdm4) from Rattus norvegicus (Rat).